A 534-amino-acid chain; its full sequence is Coiled-coil domain-containing protein 183 (534 aa).

3 coiled-coil regions span residues 10–54 (EEQT…NIRR), 136–209 (DASK…DMKI), and 323–396 (LAQR…HSNM).

This chain is Coiled-coil domain-containing protein 183 (CCDC183), found in Homo sapiens (Human).